The primary structure comprises 610 residues: Glutamine--fructose-6-phosphate aminotransferase [isomerizing] (610 aa).

Catalysis depends on C2, which acts as the Nucleophile; for GATase activity. A Glutamine amidotransferase type-2 domain is found at 2–219 (CGIVGYAGKK…SGEWGYFSQN (218 aa)). 2 consecutive SIS domains span residues 287-431 (SKDV…SDEE) and 459-600 (MSSH…PDQP). The For Fru-6P isomerization activity role is filled by K605.

In terms of assembly, homodimer.

It localises to the cytoplasm. It catalyses the reaction D-fructose 6-phosphate + L-glutamine = D-glucosamine 6-phosphate + L-glutamate. Functionally, catalyzes the first step in hexosamine metabolism, converting fructose-6P into glucosamine-6P using glutamine as a nitrogen source. The sequence is that of Glutamine--fructose-6-phosphate aminotransferase [isomerizing] from Leptospira interrogans serogroup Icterohaemorrhagiae serovar copenhageni (strain Fiocruz L1-130).